The chain runs to 159 residues: Large ribosomal subunit protein uL15 (159 aa).

A disordered region spans residues 14-44 (ASRKRVGRGRATGWGCTSGRGNKGQNSRAGA). Residues 23-35 (RATGWGCTSGRGN) are compositionally biased toward gly residues.

This sequence belongs to the universal ribosomal protein uL15 family. As to quaternary structure, part of the 50S ribosomal subunit.

Binds to the 23S rRNA. This is Large ribosomal subunit protein uL15 from Solidesulfovibrio magneticus (strain ATCC 700980 / DSM 13731 / RS-1) (Desulfovibrio magneticus).